Consider the following 669-residue polypeptide: Elongation factor G 2 (669 aa).

Positions 1-276 (MGIRNIGIMA…SIVDYLPSPF (276 aa)) constitute a tr-type G domain. GTP is bound by residues 10–17 (AHIDAGKT), 74–78 (DTPGH), and 128–131 (NKMD).

It belongs to the TRAFAC class translation factor GTPase superfamily. Classic translation factor GTPase family. EF-G/EF-2 subfamily.

The protein resides in the cytoplasm. Catalyzes the GTP-dependent ribosomal translocation step during translation elongation. During this step, the ribosome changes from the pre-translocational (PRE) to the post-translocational (POST) state as the newly formed A-site-bound peptidyl-tRNA and P-site-bound deacylated tRNA move to the P and E sites, respectively. Catalyzes the coordinated movement of the two tRNA molecules, the mRNA and conformational changes in the ribosome. This chain is Elongation factor G 2 (fusA2), found in Borreliella afzelii (strain PKo) (Borrelia afzelii).